A 568-amino-acid polypeptide reads, in one-letter code: Phenylalanine--tRNA ligase beta subunit (568 aa).

Residues 278–353 (LTPKSFEVEL…IAYGYNEIEP (76 aa)) form the B5 domain. 4 residues coordinate Mg(2+): Asp-331, Asp-337, Glu-340, and Asp-341.

Belongs to the phenylalanyl-tRNA synthetase beta subunit family. Type 2 subfamily. In terms of assembly, tetramer of two alpha and two beta subunits. Mg(2+) serves as cofactor.

The protein resides in the cytoplasm. It catalyses the reaction tRNA(Phe) + L-phenylalanine + ATP = L-phenylalanyl-tRNA(Phe) + AMP + diphosphate + H(+). The polypeptide is Phenylalanine--tRNA ligase beta subunit (Thermococcus gammatolerans (strain DSM 15229 / JCM 11827 / EJ3)).